A 111-amino-acid chain; its full sequence is Phosphoribosyl-AMP cyclohydrolase (111 aa).

Aspartate 80 contributes to the Mg(2+) binding site. Cysteine 81 contacts Zn(2+). 2 residues coordinate Mg(2+): aspartate 82 and aspartate 84. Residues cysteine 97 and cysteine 104 each contribute to the Zn(2+) site.

This sequence belongs to the PRA-CH family. Homodimer. The cofactor is Mg(2+). Zn(2+) serves as cofactor.

Its subcellular location is the cytoplasm. It carries out the reaction 1-(5-phospho-beta-D-ribosyl)-5'-AMP + H2O = 1-(5-phospho-beta-D-ribosyl)-5-[(5-phospho-beta-D-ribosylamino)methylideneamino]imidazole-4-carboxamide. The protein operates within amino-acid biosynthesis; L-histidine biosynthesis; L-histidine from 5-phospho-alpha-D-ribose 1-diphosphate: step 3/9. Its function is as follows. Catalyzes the hydrolysis of the adenine ring of phosphoribosyl-AMP. In Mycobacterium marinum (strain ATCC BAA-535 / M), this protein is Phosphoribosyl-AMP cyclohydrolase.